The following is a 534-amino-acid chain: Light-independent protochlorophyllide reductase subunit B (534 aa).

Asp-36 is a binding site for [4Fe-4S] cluster. Asp-274 serves as the catalytic Proton donor. 409–410 (GL) contacts substrate. Residues 426–446 (DEAGPSHHGGKAVPASAPRAD) form a disordered region.

It belongs to the ChlB/BchB/BchZ family. Protochlorophyllide reductase is composed of three subunits; BchL, BchN and BchB. Forms a heterotetramer of two BchB and two BchN subunits. The cofactor is [4Fe-4S] cluster.

The enzyme catalyses chlorophyllide a + oxidized 2[4Fe-4S]-[ferredoxin] + 2 ADP + 2 phosphate = protochlorophyllide a + reduced 2[4Fe-4S]-[ferredoxin] + 2 ATP + 2 H2O. Its pathway is porphyrin-containing compound metabolism; bacteriochlorophyll biosynthesis (light-independent). In terms of biological role, component of the dark-operative protochlorophyllide reductase (DPOR) that uses Mg-ATP and reduced ferredoxin to reduce ring D of protochlorophyllide (Pchlide) to form chlorophyllide a (Chlide). This reaction is light-independent. The NB-protein (BchN-BchB) is the catalytic component of the complex. This Cereibacter sphaeroides (strain ATCC 17023 / DSM 158 / JCM 6121 / CCUG 31486 / LMG 2827 / NBRC 12203 / NCIMB 8253 / ATH 2.4.1.) (Rhodobacter sphaeroides) protein is Light-independent protochlorophyllide reductase subunit B.